Reading from the N-terminus, the 343-residue chain is Signal peptide peptidase 2 (343 aa).

At 1-19 (MKTHERAANLALAGLSLAP) the chain is on the lumenal side. The chain crosses the membrane as a helical span at residues 20-40 (LVVKVNPNANVILTACLAVYV). Over 41–62 (GCYRSVKPTPPAETMSKEHAMR) the chain is Cytoplasmic. A helical transmembrane segment spans residues 63 to 83 (FPLVGSAMLLSLFLLFKFLSK). The Lumenal portion of the chain corresponds to 84–89 (DLVNTV). The chain crosses the membrane as a helical span at residues 90-110 (LTAYFFILGIAALCATLLPSI). Residues 111–141 (KRFLPKEWNDNAIVWRAPLFHSLSVEFTRSQ) are Cytoplasmic-facing. A helical membrane pass occupies residues 142–162 (VVASIPGFFFCIWYAAKKHWL). Over 163–165 (ANN) the chain is Lumenal. A helical membrane pass occupies residues 166–186 (VLGISFCIQGIEMLSLGSFKT). Residues 187-188 (GA) are Cytoplasmic-facing. Residues 189–209 (ILLSGLFFYDIFWVFFTPVMV) form a helical membrane-spanning segment. Asp198 is a catalytic residue. Over 210–230 (SVAKSFDAPIKLLFPTGDAAR) the chain is Lumenal. The helical transmembrane segment at 231–251 (PFSMLGLGDIVIPGIFVALAL) threads the bilayer. Residue Asp239 is part of the active site. The Cytoplasmic portion of the chain corresponds to 252 to 266 (RFDVSRGIKNRYFNS). The chain crosses the membrane as a helical span at residues 267–287 (AFLGYTVGLTVTIIVMNWFQA). Residues 288–290 (AQP) lie on the Lumenal side of the membrane. Positions 290–292 (PAL) match the PAL motif. Residues 291 to 311 (ALLYIVPGVIGFVAVHCLWNG) form a helical membrane-spanning segment. Residues 312 to 343 (EVKPLLEYNESKAEEEEACEEDTDSKQNKKKE) lie on the Cytoplasmic side of the membrane. A compositionally biased stretch (acidic residues) spans 324 to 334 (AEEEEACEEDT). Residues 324–343 (AEEEEACEEDTDSKQNKKKE) are disordered. The Endoplasmic reticulum targeting signal signature appears at 340–343 (KKKE).

This sequence belongs to the peptidase A22B family. Ubiquitous.

Its subcellular location is the endoplasmic reticulum membrane. Functionally, intramembrane-cleaving aspartic protease (I-CLiP) that cleaves type II membrane signal peptides in the hydrophobic plane of the membrane. Catalyzes intramembrane proteolysis of some signal peptides after they have been cleaved from a preprotein, resulting in the release of the fragment from the ER membrane into the cytoplasm. The sequence is that of Signal peptide peptidase 2 (SPP2) from Oryza sativa subsp. japonica (Rice).